Here is a 553-residue protein sequence, read N- to C-terminus: Zinc finger matrin-type protein 1 (553 aa).

The disordered stretch occupies residues 16–36 (TPSSPAATCSGPMAGGDTSSN). 4 consecutive Matrin-type zinc fingers follow at residues 61–91 (TFCK…KVRL), 125–155 (KFCG…KMRQ), 223–253 (KYCK…NQAR), and 275–305 (YVCP…KESM). Disordered regions lie at residues 341 to 402 (QFRQ…DQRV) and 428 to 553 (HISR…ILGF). Over residues 350-362 (DSCDYEEEEEQEP) the composition is skewed to acidic residues. The span at 431–453 (RSPTSQDSSDNSSGSSSDESSGS) shows a compositional bias: low complexity. A compositionally biased stretch (basic residues) spans 456–476 (KDKRRKRKHHRESRLRGSGRI). The segment covering 477-513 (RRGDENSEKRKRKGEDADSGKEDNKHDRGKTSGGDKD) has biased composition (basic and acidic residues).

It localises to the nucleus. The polypeptide is Zinc finger matrin-type protein 1 (zmat1) (Xenopus tropicalis (Western clawed frog)).